We begin with the raw amino-acid sequence, 1139 residues long: MCRAIAVALIVYLAQHYILAHAEVIASGRLEKCVVDGVTEELDCQEKVVVTLTVGNGQSLQTEALEFSLSCLNSPDGRCPCSCSAADPTCACRDLAAPLRVSLTKSPLWASYPLQYLSSFNWKPLEVILRPSNKVCKDGDWEDSPTCGWFSQGGVRVADSQGFCCECSSSQVWDDTFGSSKERTRANLDCDFWSDPLDILIGRKPVSAHCLTFDPQWYSGYELGAASLQFEIAITVEVPTAPSPTTATTSATPRTNNSSSANSTNSTNSPAPQFLSPPAPSTREVLHLGPSVPLASSASRLLSAKLLGDLAMYTQLPAISNQVLMVPQPPAAAAATGSPLDATLATNRSAWMLLDKTMLSMDGLACDKVGTGFSAFRYQPSGCGRAPQACLSGQLKDLWEADLARIADGRVPLYMITRFTGGSDTTLQSFSGGPLSFALPVTSHSQSLVTLSVAADGVRLVTNRSPGKITGAAVCRFAGTSCGGFEAVAARGYIYVNITNTGRLDSDYTLTVSNCSSNVRPIEARTLAVRAGSAASLDPPMELYVEDQAAAAARTCTVSLYDSVGAVTDSLTLSFYTNATQLVVKPSGGYNGTGDGAGVKRNGTDCSTACTNPIDVLCFVTKKCWSKFGRLLGIIGGALVGLGLLAVALKFGWLASLAASCCGGGGGAAAGGAGGGMGLGTGGGGGCFGGGQQQQQLPPAASHAMSPPQQQQRSHAEVAAGAAVAGAGAAGAAAAVLGAKHGGGGGGARGKQQHADTRHLQDRDSRAIDGGASIGSSSAGGSSSLSSYSQPREAGGRLLQPPAAAVFVPEGGGGGAAGDEGARAQSSDWDARGRSPRVADEHGSPRQRYDGVRQSPYMVSANPYDGWYDGGSGGGGGGGGGGYGREAPPPQGPPPHPVGAPPPPPRRRSLWERMWLQRPGGGGGGGGGGGGGGGGGSGGGVDQHGGRSCADAARRGGGGPGGMRGVEGLMSNGGRPNGPHPHAPPPPPPPQQQQQQQRQRRSFLESLTAMMTLPWGGGREEEAGGDRRGGGRGGAAAAHGGRGAGGGRGHPPSIGSPPPGPLQPPEYGPQGGQARRWGAGGGRGGVGGDGGGGGVGAAAYVQLSTGGRGGGGGGGRGRGGGREGPTWHNPVYDWQAPPK.

The first 22 residues, 1–22, serve as a signal peptide directing secretion; sequence MCRAIAVALIVYLAQHYILAHA. The Extracellular portion of the chain corresponds to 23–630; the sequence is EVIASGRLEK…TKKCWSKFGR (608 aa). Intrachain disulfides connect Cys-33–Cys-44, Cys-136–Cys-164, Cys-147–Cys-210, Cys-165–Cys-383, Cys-167–Cys-190, Cys-366–Cys-390, and Cys-475–Cys-482. Residues 241-272 show a composition bias toward low complexity; it reads APSPTTATTSATPRTNNSSSANSTNSTNSPAP. The tract at residues 241 to 283 is disordered; that stretch reads APSPTTATTSATPRTNNSSSANSTNSTNSPAPQFLSPPAPSTR. Residue Asn-497 is glycosylated (N-linked (GlcNAc...) asparagine). The cysteines at positions 515 and 556 are disulfide-linked. Thr-577 carries O-linked (GlcNAc...) threonine glycosylation. The helical transmembrane segment at 631-651 threads the bilayer; it reads LLGIIGGALVGLGLLAVALKF. Residues 652 to 1139 lie on the Cytoplasmic side of the membrane; it reads GWLASLAASC…PVYDWQAPPK (488 aa). Disordered regions lie at residues 689–719 and 741–1139; these read GGGQQQQQLPPAASHAMSPPQQQQRSHAEVA and HGGG…APPK. The span at 753-767 shows a compositional bias: basic and acidic residues; that stretch reads QHADTRHLQDRDSRA. Over residues 770-789 the composition is skewed to low complexity; the sequence is GGASIGSSSAGGSSSLSSYS. Basic and acidic residues predominate over residues 829–851; it reads WDARGRSPRVADEHGSPRQRYDG. A compositionally biased stretch (gly residues) spans 868 to 884; it reads YDGGSGGGGGGGGGGYG. Residues 887 to 904 show a composition bias toward pro residues; the sequence is APPPQGPPPHPVGAPPPP. Gly residues-rich tracts occupy residues 919–943 and 955–965; these read PGGGGGGGGGGGGGGGGGSGGGVDQ and RGGGGPGGMRG. The span at 978-991 shows a compositional bias: pro residues; sequence GPHPHAPPPPPPPQ. A compositionally biased stretch (basic and acidic residues) spans 1018–1029; that stretch reads GREEEAGGDRRG. Over residues 1040–1049 the composition is skewed to gly residues; it reads GGRGAGGGRG. Residues 1054-1067 show a composition bias toward pro residues; sequence IGSPPPGPLQPPEY. Composition is skewed to gly residues over residues 1078 to 1096 and 1106 to 1118; these read GAGGGRGGVGGDGGGGGVG and GGRGGGGGGGRGR.

Belongs to the HAP2/GCS1 family. Monomer. Homotrimer. Membrane contact and insertion (via its extracellular domain) into a lipid membrane probably triggers trimerization. Post-translationally, the protein present at the cell membrane is rapidly degraded after fusion between male (minus) and female (plus) gametes, contrary to the protein present in intracellular pools. This may represent a mechanism to avoid fusion of several male gametes with a single female gamete. N-glycosylated.

It is found in the cell membrane. The protein resides in the cell projection. Its subcellular location is the cytoplasmic vesicle membrane. Its function is as follows. During fertilization, required on male (minus) gametes for their fusion with female (plus) gametes. Required for membrane fusion, but not for the initial adhesion between gametes. Inserts (via its extracellular domain) into lipid membranes (in vitro). Probably initiates the fusion of gamete cell membranes by inserting its extracellular domain into the cell membrane of a female gamete. This is Hapless 2 from Chlamydomonas reinhardtii (Chlamydomonas smithii).